The chain runs to 138 residues: Putative pre-16S rRNA nuclease (138 aa).

It belongs to the YqgF nuclease family.

The protein resides in the cytoplasm. Its function is as follows. Could be a nuclease involved in processing of the 5'-end of pre-16S rRNA. This is Putative pre-16S rRNA nuclease from Carboxydothermus hydrogenoformans (strain ATCC BAA-161 / DSM 6008 / Z-2901).